The primary structure comprises 278 residues: Small ribosomal subunit protein uS3 (278 aa).

A KH type-2 domain is found at 38 to 106 (IRKLLATGLE…QVQLNILEVK (69 aa)). Residues 215-278 (AAAAPAGADR…AAGQPETTES (64 aa)) are disordered. The segment covering 238 to 278 (SGASGTTATSTDAGRAATEEAPATDAAATAPAAGQPETTES) has biased composition (low complexity).

This sequence belongs to the universal ribosomal protein uS3 family. As to quaternary structure, part of the 30S ribosomal subunit. Forms a tight complex with proteins S10 and S14.

Binds the lower part of the 30S subunit head. Binds mRNA in the 70S ribosome, positioning it for translation. The polypeptide is Small ribosomal subunit protein uS3 (Mycolicibacterium gilvum (strain PYR-GCK) (Mycobacterium gilvum (strain PYR-GCK))).